The following is a 500-amino-acid chain: ADP,ATP carrier protein 5 (500 aa).

11 helical membrane-spanning segments follow: residues 26–46 (LGKFIPISALMFCILFNQNIL), 62–82 (IAGFAKVYCVTPVAALFVIIY), 94–114 (IFYYLSAFFISCFILFAFVIY), 149–169 (YIVYYSLAELWPNIFYVLLFW), 184–204 (FYTLFSLFGNSSLILVGFLMM), 224–244 (ITLVQVSTTIIAIVAIICCLL), 287–307 (LWLLLICSAAFGFAINLVEAV), 328–348 (LYILWTGVAIIVMTIIGNNVM), 357–377 (AVISPVIIMVTGVLFFGLIVF), 381–401 (ILSLFDGAILMSPLALAVSIG), and 469–489 (SISPILMVVFTFVCFAWIYAV).

The protein belongs to the ADP/ATP translocase tlc family.

Its subcellular location is the cell membrane. In terms of biological role, provides the rickettsial cell with host ATP in exchange for rickettsial ADP. This is an obligate exchange system. This energy acquiring activity is an important component of rickettsial parasitism. This Rickettsia prowazekii (strain Madrid E) protein is ADP,ATP carrier protein 5 (tlcE).